The chain runs to 415 residues: SNF1 protein kinase subunit beta-2 (415 aa).

Disordered stretches follow at residues 1–43 (MGTT…EMDA), 55–158 (KCSD…PSEI), and 249–276 (EKNPTNEKIRSKEADSMRPPTSDRSSIA). G2 is lipidated: N-myristoyl glycine. Positions 9–19 (AQKKQTTKKCR) are enriched in basic residues. Residues 55–69 (KCSDSQDAGQPSREG) are compositionally biased toward polar residues. S66 bears the Phosphoserine mark. 2 stretches are compositionally biased toward basic and acidic residues: residues 122-150 (PKQDASPDDDRSGHSSPREEGQQQIRAKE) and 249-264 (EKNPTNEKIRSKEADS). The tract at residues 154–335 (GPSEIKSSLM…LDRQQSNTDT (182 aa)) is kinase-interacting sequence (KIS); required for interaction with SNF1. S298 carries the phosphoserine modification. Residues 336–415 (SWLTPPQLPP…QILYTPIESS (80 aa)) form an association with SNF1 kinase complex (ASC) domain; required for interaction with SNF4 region.

This sequence belongs to the 5'-AMP-activated protein kinase beta subunit family. Component of the SNF1 kinase complex, a heterotrimeric complex composed of the catalytic alpha subunit SNF1, one of the three related beta subunits SIP1, SIP2 or GAL83, and the regulatory gamma subunit SNF4. The beta subunit serves as a bridge between the catalytic and the regulatory subunit. Interacts (via KIS domain) with SNF1. Interacts (via ASC domain) with SNF4. Post-translationally, phosphorylated by SNF1 in vitro.

The protein resides in the cytoplasm. The protein localises to the cell membrane. Its function is as follows. Beta subunit of the SNF1 kinase complex, which is required for transcriptional, metabolic, and developmental adaptations in response to glucose limitation. Has a structural role, mediating heterotrimer formation, and a regulatory role, defining carbon source-regulated subcellular location and substrate specificity of the SNF1 kinase complex. Involved in the regulation of aging. Acts as a negative regulator of nuclear SNF1 activity in young cells by sequestering its activating gamma subunit at the plasma membrane. The chain is SNF1 protein kinase subunit beta-2 (SIP2) from Saccharomyces cerevisiae (strain ATCC 204508 / S288c) (Baker's yeast).